The following is a 465-amino-acid chain: UDP-N-acetylmuramate--L-alanine ligase (465 aa).

Residue 114–120 participates in ATP binding; sequence GTHGKTT.

Belongs to the MurCDEF family.

It is found in the cytoplasm. The enzyme catalyses UDP-N-acetyl-alpha-D-muramate + L-alanine + ATP = UDP-N-acetyl-alpha-D-muramoyl-L-alanine + ADP + phosphate + H(+). It functions in the pathway cell wall biogenesis; peptidoglycan biosynthesis. In terms of biological role, cell wall formation. The sequence is that of UDP-N-acetylmuramate--L-alanine ligase from Chelativorans sp. (strain BNC1).